A 191-amino-acid polypeptide reads, in one-letter code: Peptidyl-tRNA hydrolase (191 aa).

Tyr-15 lines the tRNA pocket. The active-site Proton acceptor is the His-20. Residues Phe-66, Asn-68, and Asn-114 each coordinate tRNA.

Belongs to the PTH family. As to quaternary structure, monomer.

It is found in the cytoplasm. It catalyses the reaction an N-acyl-L-alpha-aminoacyl-tRNA + H2O = an N-acyl-L-amino acid + a tRNA + H(+). Hydrolyzes ribosome-free peptidyl-tRNAs (with 1 or more amino acids incorporated), which drop off the ribosome during protein synthesis, or as a result of ribosome stalling. Its function is as follows. Catalyzes the release of premature peptidyl moieties from peptidyl-tRNA molecules trapped in stalled 50S ribosomal subunits, and thus maintains levels of free tRNAs and 50S ribosomes. In Streptococcus agalactiae serotype III (strain NEM316), this protein is Peptidyl-tRNA hydrolase.